The sequence spans 215 residues: UPF0502 protein YceH (215 aa).

K80 carries the N6-acetyllysine modification.

It belongs to the UPF0502 family.

This is UPF0502 protein YceH from Escherichia coli O81 (strain ED1a).